Consider the following 337-residue polypeptide: Protein-arginine kinase (337 aa).

The region spanning 12 to 240 (IVIASKVKIL…NKLILREKNQ (229 aa)) is the Phosphagen kinase C-terminal domain. Residues 15–19 (ASKVK), 162–166 (RAKVF), and 193–198 (KSIYNS) contribute to the ATP site.

It belongs to the ATP:guanido phosphotransferase family.

The enzyme catalyses L-arginyl-[protein] + ATP = N(omega)-phospho-L-arginyl-[protein] + ADP + H(+). Its function is as follows. Catalyzes the specific phosphorylation of arginine residues in proteins. The chain is Protein-arginine kinase from Clostridium perfringens (strain ATCC 13124 / DSM 756 / JCM 1290 / NCIMB 6125 / NCTC 8237 / Type A).